Here is a 107-residue protein sequence, read N- to C-terminus: U1-lycotoxin-Ls1c (107 aa).

Residues 1–20 form the signal peptide; that stretch reads MMKVLVVVALLVTLISYSSS. A propeptide spanning residues 21 to 41 is cleaved from the precursor; sequence EGIDDLEADELLSLMANEQTR. 4 cysteine pairs are disulfide-bonded: Cys44/Cys59, Cys51/Cys68, Cys58/Cys86, and Cys70/Cys84.

The protein belongs to the neurotoxin 19 (CSTX) family. 04 (U1-Lctx) subfamily. As to expression, expressed by the venom gland.

It localises to the secreted. The chain is U1-lycotoxin-Ls1c from Lycosa singoriensis (Wolf spider).